We begin with the raw amino-acid sequence, 695 residues long: MLMAKPDVPSSILPRSSSILPNSIETLDENESIEAQVNNVQSLALSSPNRDRSDDDDNNNNHDSVSIPPPIYDGYSSSSSDESQSVPSPPINLDHDDDECQIPIRNTSQALDDIDDDIWGDDDLPETRRPWTPNVSPGFGSDDDDDNDDDNSKNEPRKSLFYGFRQEPEPVTGVGAGLWNLGNSCFLNSVFQCFTHTVPLIESLLSFRYEVPCHCGNEFFCVIRAIRYHIEAALRPERCPIAPYFFFDNLNYFSPDFQRYQQEDAHEFLQAFLEKLEICGSDRTSFRGDITSQDVFSGRLISGLRCCNCDYVSETYEKSVGLSLEIEDVDTLGSALESFTRVEKLDEQLTCDNCNEKVSKEKQLLLDKLPLVATFHLKRFKNNGLYMEKIYKHVKIPLEIDLQPYMRNIQENEVSTKYHLYALVEHFGYSVAYGHYSSYVRSAPKIWHHFDDSKVTRIDEDMVLSQDSYILFYAREGTRWFSSVYEEMQPLVEASLLNSSPKSVLDSSTNGECLSEISYENGDKASKPCDSAGVCNQHVKTKEDFVSLSNDDVFLSAESSSGEESPMGELLDPLDPDDSYSPCTEKESDSCLAIERATIRDDFFPLLLDQNQESSTSSPKLQERTFEMQLLQMEETTKSQEPWKQPLSSISNIADSMEAEFVYGDLMKKPSPRARELLDQAISTNGSPPKKLKTT.

Disordered stretches follow at residues 1–20 (MLMAKPDVPSSILPRSSSIL) and 42–162 (SLAL…SLFY). Low complexity-rich tracts occupy residues 9–20 (PSSILPRSSSIL) and 61–86 (NHDSVSIPPPIYDGYSSSSSDESQSV). A compositionally biased stretch (acidic residues) spans 112-124 (DDIDDDIWGDDDL). Residues 176-476 (AGLWNLGNSC…DSYILFYARE (301 aa)) enclose the USP domain. The Nucleophile role is filled by cysteine 185. Histidine 435 (proton acceptor) is an active-site residue. The segment covering 556-571 (SAESSSGEESPMGELL) has biased composition (low complexity). Disordered stretches follow at residues 556–585 (SAESSSGEESPMGELLDPLDPDDSYSPCTE) and 674–695 (ARELLDQAISTNGSPPKKLKTT).

This sequence belongs to the peptidase C19 family.

The catalysed reaction is Thiol-dependent hydrolysis of ester, thioester, amide, peptide and isopeptide bonds formed by the C-terminal Gly of ubiquitin (a 76-residue protein attached to proteins as an intracellular targeting signal).. Its function is as follows. Recognizes and hydrolyzes the peptide bond at the C-terminal Gly of ubiquitin. Involved in the processing of poly-ubiquitin precursors as well as that of ubiquitinated proteins. The chain is Ubiquitin carboxyl-terminal hydrolase 20 (UBP20) from Arabidopsis thaliana (Mouse-ear cress).